We begin with the raw amino-acid sequence, 496 residues long: MDSQQYNSNINLILNDEHHTETLNVDKKILIEKCEYFSRMLTQFSEINADTITIKVVDSNIAKNVIMSMFSDIDIYKNIGNCCDWKYLLLLYKCCDFFNISFDITKLNKLLVPNEGFELLLDIIDIIGYNYDMIELIINNLPKNYDLGKFPRELLETLYDHSTSYNIVSGSLDRTIKIWNVETQDFNSKIFTKLSKTLRYFPINKEQIFDNNIKCMDYSHKFNQIISGSNGGIKLWNIDNREVIKEFQCDYKINDICFSPDGKSCVCANKFLSIYDLDNGRRKVLNLTRIKSIGCIKTCVCWTSDNIIACGDSDGVIEFWNAETNLIIKWCQVSKSRISNISFSPDRSQIAVSNQTKIILYDSIFDKKILEIKNSYIINFAYSPTEDVLVLIDGYLIKLYNCRTGNLFRTFNLYDCSSQNTMYFSLQSKIHFSPTGNQIIFTCDTKNENLVGIWNWKLNDDIIYLKGHQKQITSLCIIPDSENSTNKRIMNMLKNQ.

The region spanning 8–78 (SNINLILNDE…MFSDIDIYKN (71 aa)) is the BTB domain. 6 WD repeats span residues 149–189 (KFPR…FNSK), 208–248 (IFDN…KEFQ), 250–285 (DYKINDICFSPDGKSCVCANKFLSIYDLDNGRRKVL), 291–330 (KSIGCIKTCVCWTSDNIIACGDSDGVIEFWNAETNLIIKW), 333–371 (VSKSRISNISFSPDRSQIAVSNQTKIILYDSIFDKKILE), and 422–464 (MYFS…DIIY).

It belongs to the mimivirus BTB/WD family.

The chain is Putative BTB/POZ domain and WD-repeat protein R61 from Acanthamoeba polyphaga (Amoeba).